The primary structure comprises 333 residues: Meiotic drive suppressor wtf9 (333 aa).

The interval 1-69 (MKNNYTSLKS…ENHSSGTTDN (69 aa)) is disordered. Positions 19–30 (KTDHEIDLEKGP) are enriched in basic and acidic residues. Helical transmembrane passes span 73–95 (LLIKLLISFTSIILFNAPAVCYL), 108–130 (VEWTLFGFWCFVCTLALIFLTYF), 174–191 (WVVIIWLLWVVICYTLFL), and 204–226 (LICSTCSISAALLLFLLYVRLPF).

Belongs to the WTF family. In terms of assembly, homomer. Interacts with other proteins that exhibit high sequence similarity.

It localises to the spore membrane. The protein resides in the vacuole membrane. In terms of biological role, acts as a suppressor component of the dual wtf meiotic drive system, and can suppress but not confer meiotic drive by compatible poisons. Wtf meiotic drive systems promote unequal transmission of alleles from the parental zygote to progeny spores by encoding a poison and an antidote from the same locus; the poison is trans-acting and forms toxic aggregates in all spores within an ascus, wherease the antidote is spore-specific and targets aggregates for degradation by the vacuole. Meiotic drive by wtf systems therefore lead to poisoning of all progeny that do not inherit the dual poison/antidote allele, or express a compatible antidote. This is Meiotic drive suppressor wtf9 from Schizosaccharomyces pombe (strain 972 / ATCC 24843) (Fission yeast).